An 883-amino-acid chain; its full sequence is Leucine--tRNA ligase (883 aa).

The 'HIGH' region motif lies at 43 to 53 (PYPSGRIHIGH). The short motif at 630-634 (KMSKS) is the 'KMSKS' region element. Lys633 serves as a coordination point for ATP.

This sequence belongs to the class-I aminoacyl-tRNA synthetase family.

The protein localises to the cytoplasm. It catalyses the reaction tRNA(Leu) + L-leucine + ATP = L-leucyl-tRNA(Leu) + AMP + diphosphate. The polypeptide is Leucine--tRNA ligase (Nitrobacter winogradskyi (strain ATCC 25391 / DSM 10237 / CIP 104748 / NCIMB 11846 / Nb-255)).